The primary structure comprises 353 residues: Protein Wnt-11b (353 aa).

Positions 1–22 (MAPTRHWVTPLLLLCCSGICGA) are cleaved as a signal peptide. N-linked (GlcNAc...) asparagine glycosylation is found at N31, N38, and N88. Intrachain disulfides connect C78–C89, C128–C136, C138–C155, C208–C222, and C210–C217. The O-palmitoleoyl serine; by PORCN moiety is linked to residue S214. A sulfotyrosine mark is found at Y274 and Y281. Cystine bridges form between C282/C313, C298/C308, C312/C352, C328/C343, C330/C340, and C335/C336. An N-linked (GlcNAc...) asparagine glycan is attached at N299.

The protein belongs to the Wnt family. As to quaternary structure, homodimer. Secreted homodimers form a complex with wnt5a homodimers; tyrosine sulfation of both wnt11 and wnt5a by tpst1 is required for this interaction. Interacts with the transmembrane receptor fzd7/fz7. Interacts with lrp6 and ryk. Interacts with tdgf1/frl1. Interacts weakly with frzb1 and strongly with frzb2/crescent. Interaction with frzb2/crescent antagonizes wnt11 function in the neuroectoderm, but enhances it in mesodermal tissue. Glycosylation is required for protein secretion. Post-translationally, palmitoleoylation is required for efficient binding to frizzled receptors. Depalmitoleoylation leads to Wnt signaling pathway inhibition. Transcripts are expressed ubiquitously in early oocytes but become vegetally localized during mid-oogenesis then enriched on the dorsal side by the 8 to 16 cell stage. The protein becomes asymmetrically concentrated on the dorsal side by the 64-cell stage. During gastrulation, expressed in the lateral and ventral marginal zone, and during tadpole stages in the somites and first branchial arch. Weakly expressed in the pronephros from at least stage 12.5, with kidney expression increasing until stage 35. Expressed in the prospective posterior gut between stages 13 and 20, and in the deep foregut endoderm. Prior to neural crest cell migration, expressed in a domain flanking the neural crest on the lateral or epidermal side (the opposite side to wnt11/wnt11-r).

The protein localises to the secreted. It is found in the extracellular space. Its subcellular location is the extracellular matrix. Ligand for the frizzled7 transmembrane receptor. Primarily acts via non-canonical Wnt pathways mediated by either Ca(2+) and PKC, or by JNK and dvl2/dsh. Depending on the cellular context, can also signal via the canonical Wnt pathway mediated by beta-catenin and dvl2/dsh. May also inhibit canonical Wnt signaling. Maternally initiates dorsal/ventral axis formation by a canonical route, which signals via lrp6. In a complex with wnt5a, activates the canonical and non-canonical processes involved in axis formation. In the non-canonical pathway, acts through fzd7/fz7 to induce phosphorylation of dvl2/dsh. Signals through a non-canonical Wnt pathway to regulate convergent extension movements during gastrulation. Interactions with the secreted Wnt antagonist sfrp5 to coordinate foregut development, acting via a non-canonical Wnt pathway whereby sfrp5 restricts wnt11b activity to prevent inappropriate foregut formation. Mediates cardiogenesis via non-canonical Wnt signaling involving JNK-activation and PKC. Acts redundantly with wnt11/wnt11r during pronephros induction. The polypeptide is Protein Wnt-11b (wnt11b) (Xenopus laevis (African clawed frog)).